The chain runs to 127 residues: MAKPTRKRRVKKNIESGIAHIHATFNNTIVMITDVHGNAIAWSSAGALGFKGSRKSTPFAAQMASEAAAKSAQEHGLKSVEVTVKGPGSGRESAIRALAAAGLEVTAIRDVTPVPHNGARPPKRRRV.

It belongs to the universal ribosomal protein uS11 family. As to quaternary structure, part of the 30S ribosomal subunit. Interacts with proteins S7 and S18. Binds to IF-3.

Located on the platform of the 30S subunit, it bridges several disparate RNA helices of the 16S rRNA. Forms part of the Shine-Dalgarno cleft in the 70S ribosome. The polypeptide is Small ribosomal subunit protein uS11 (Streptococcus gordonii (strain Challis / ATCC 35105 / BCRC 15272 / CH1 / DL1 / V288)).